Reading from the N-terminus, the 410-residue chain is Serine hydroxymethyltransferase (410 aa).

(6S)-5,6,7,8-tetrahydrofolate contacts are provided by residues Leu-119 and 123–125; that span reads GHL. The residue at position 228 (Lys-228) is an N6-(pyridoxal phosphate)lysine. Residue 351-353 participates in (6S)-5,6,7,8-tetrahydrofolate binding; sequence SPF.

Belongs to the SHMT family. As to quaternary structure, homodimer. Requires pyridoxal 5'-phosphate as cofactor.

It is found in the cytoplasm. The enzyme catalyses (6R)-5,10-methylene-5,6,7,8-tetrahydrofolate + glycine + H2O = (6S)-5,6,7,8-tetrahydrofolate + L-serine. It functions in the pathway one-carbon metabolism; tetrahydrofolate interconversion. It participates in amino-acid biosynthesis; glycine biosynthesis; glycine from L-serine: step 1/1. Catalyzes the reversible interconversion of serine and glycine with tetrahydrofolate (THF) serving as the one-carbon carrier. This reaction serves as the major source of one-carbon groups required for the biosynthesis of purines, thymidylate, methionine, and other important biomolecules. Also exhibits THF-independent aldolase activity toward beta-hydroxyamino acids, producing glycine and aldehydes, via a retro-aldol mechanism. This is Serine hydroxymethyltransferase from Clostridium perfringens (strain 13 / Type A).